Reading from the N-terminus, the 181-residue chain is Oligoribonuclease (181 aa).

In terms of domain architecture, Exonuclease spans 8-171; it reads LIWIDLEMTG…DDIRESVAEL (164 aa). Tyr129 is a catalytic residue.

This sequence belongs to the oligoribonuclease family.

The protein resides in the cytoplasm. 3'-to-5' exoribonuclease specific for small oligoribonucleotides. This Sodalis glossinidius (strain morsitans) protein is Oligoribonuclease.